The primary structure comprises 77 residues: Defensin-like protein (77 aa).

The first 30 residues, 1–30 (MERGMRLFSSLVLVLLLVTATEMGPKVAEA), serve as a signal peptide directing secretion. Intrachain disulfides connect Cys-33/Cys-77, Cys-44/Cys-64, Cys-50/Cys-71, and Cys-54/Cys-73.

The protein belongs to the DEFL family.

It localises to the secreted. This chain is Defensin-like protein, found in Nelumbo nucifera (Sacred lotus).